Here is a 295-residue protein sequence, read N- to C-terminus: MDAEKIHISVLLEETMEFLCLQPGGIYVDGTMGLGGHTSAILERTAPDGRVVAFEWDENAIKASRERLAPYGERLTLVRRNFAEIGVGLTEAGISHIDGLLIDIGLSSLQLDTGTRGFSFQRDDDLDMRMDERGEMTAATIIATCTEEQLADLFYCYGEERQARPIAAAIVAARKLEPIQTTKQLVRVVARAIPKRFHPKKIHVATKVFQALRIAVNTELENLSKIIDDAGEFLKPGSRFCIISFHSLEDRIVKRKFRENPNFKVITNKPVKAGEEELDRNYRSRSALLRVAEKV.

S-adenosyl-L-methionine-binding positions include 35–37 (GGH), Glu55, Phe82, Asp103, and Gln110.

The protein belongs to the methyltransferase superfamily. RsmH family.

Its subcellular location is the cytoplasm. The catalysed reaction is cytidine(1402) in 16S rRNA + S-adenosyl-L-methionine = N(4)-methylcytidine(1402) in 16S rRNA + S-adenosyl-L-homocysteine + H(+). Its function is as follows. Specifically methylates the N4 position of cytidine in position 1402 (C1402) of 16S rRNA. The polypeptide is Ribosomal RNA small subunit methyltransferase H (Desulfotalea psychrophila (strain LSv54 / DSM 12343)).